Consider the following 508-residue polypeptide: Histidine ammonia-lyase (508 aa).

The segment at residues 141–143 (ASG) is a cross-link (5-imidazolinone (Ala-Gly)). Position 142 is a 2,3-didehydroalanine (Ser) (S142).

The protein belongs to the PAL/histidase family. In terms of processing, contains an active site 4-methylidene-imidazol-5-one (MIO), which is formed autocatalytically by cyclization and dehydration of residues Ala-Ser-Gly.

The protein localises to the cytoplasm. The enzyme catalyses L-histidine = trans-urocanate + NH4(+). Its pathway is amino-acid degradation; L-histidine degradation into L-glutamate; N-formimidoyl-L-glutamate from L-histidine: step 1/3. This chain is Histidine ammonia-lyase, found in Geobacillus sp. (strain WCH70).